A 423-amino-acid chain; its full sequence is MKAELIAVGTEILTGQIVNTNAQFLSEKMAELGIDVYFQTAVGDNEERLLSVIDIASQRSDLVILCGGLGPTDDDLTKQTLAKYLGKALVFDEQAGQKLDTFFAHRKHTARTPNNQRQAQLIEGSVALQNQTGLAVGGLITVDGVTYVVLPGPPSELKPMVKNELVPLLSASHASLYSRVLRFFGIGESQLVTALEDLIKHQTDPTIAPYAKTGEVTLRLSTKADNQALADERLNRLEAQLLSIRTVDNQPLRRLLYGYGEDNSLARETFELLKRSGKTITAAESLTAGLFQAQLTDFAGASQVFNGGFITYSIEEKAKMLGIPLVELQRHGVVSSFTAEQMAAQARCLTNSDIGIGLTGVAGPEALEGQPAGTVFIGLATKNKVESLKVVIGGRSRLDVRYIAALYAFNMVRKALLKSENLL.

It belongs to the CinA family.

The chain is Putative competence-damage inducible protein from Streptococcus equi subsp. zooepidemicus (strain MGCS10565).